A 339-amino-acid chain; its full sequence is Ketol-acid reductoisomerase (NADP(+)) (339 aa).

One can recognise a KARI N-terminal Rossmann domain in the interval 1–182 (MRVYYDRDAD…GGGRAGIIET (182 aa)). NADP(+) contacts are provided by residues 24–27 (YGSQ), arginine 48, serine 51, threonine 53, and 83–86 (DELQ). Histidine 108 is an active-site residue. Glycine 134 contacts NADP(+). The 146-residue stretch at 183-328 (TFKEECETDL…AKLRGMMPWI (146 aa)) folds into the KARI C-terminal knotted domain. Residues aspartate 191, glutamate 195, glutamate 227, and glutamate 231 each contribute to the Mg(2+) site. Serine 252 is a binding site for substrate.

The protein belongs to the ketol-acid reductoisomerase family. Mg(2+) serves as cofactor.

The enzyme catalyses (2R)-2,3-dihydroxy-3-methylbutanoate + NADP(+) = (2S)-2-acetolactate + NADPH + H(+). The catalysed reaction is (2R,3R)-2,3-dihydroxy-3-methylpentanoate + NADP(+) = (S)-2-ethyl-2-hydroxy-3-oxobutanoate + NADPH + H(+). The protein operates within amino-acid biosynthesis; L-isoleucine biosynthesis; L-isoleucine from 2-oxobutanoate: step 2/4. It participates in amino-acid biosynthesis; L-valine biosynthesis; L-valine from pyruvate: step 2/4. Its function is as follows. Involved in the biosynthesis of branched-chain amino acids (BCAA). Catalyzes an alkyl-migration followed by a ketol-acid reduction of (S)-2-acetolactate (S2AL) to yield (R)-2,3-dihydroxy-isovalerate. In the isomerase reaction, S2AL is rearranged via a Mg-dependent methyl migration to produce 3-hydroxy-3-methyl-2-ketobutyrate (HMKB). In the reductase reaction, this 2-ketoacid undergoes a metal-dependent reduction by NADPH to yield (R)-2,3-dihydroxy-isovalerate. The protein is Ketol-acid reductoisomerase (NADP(+)) of Methylorubrum extorquens (strain CM4 / NCIMB 13688) (Methylobacterium extorquens).